The chain runs to 228 residues: 2-C-methyl-D-erythritol 4-phosphate cytidylyltransferase (228 aa).

The protein belongs to the IspD/TarI cytidylyltransferase family. IspD subfamily.

The enzyme catalyses 2-C-methyl-D-erythritol 4-phosphate + CTP + H(+) = 4-CDP-2-C-methyl-D-erythritol + diphosphate. Its pathway is isoprenoid biosynthesis; isopentenyl diphosphate biosynthesis via DXP pathway; isopentenyl diphosphate from 1-deoxy-D-xylulose 5-phosphate: step 2/6. In terms of biological role, catalyzes the formation of 4-diphosphocytidyl-2-C-methyl-D-erythritol from CTP and 2-C-methyl-D-erythritol 4-phosphate (MEP). The chain is 2-C-methyl-D-erythritol 4-phosphate cytidylyltransferase from Crocosphaera subtropica (strain ATCC 51142 / BH68) (Cyanothece sp. (strain ATCC 51142)).